The primary structure comprises 46 residues: Mu-segestritoxin-Sf1f (46 aa).

Disulfide bonds link Cys3–Cys19, Cys10–Cys22, Cys18–Cys42, and Cys24–Cys40. Residues 31–33 (RPW) form a keys region for toxin activity region.

Belongs to the neurotoxin 16 (SFI) family. As to expression, expressed by the venom gland.

It is found in the secreted. Its function is as follows. Insecticidal toxin. It inhibits insect voltage-gated sodium channels (Nav) by partially blocking the channel pore in DUM neurons from the American cockroach, not by acting as a gating modifier. The inhibition is only partially reversible after prolonged washout. In vivo, the toxin causes flaccid paralysis followed by death when injected into Heliothis virescens larvae. It also causes uncoordinated movements followed by full paralysis to sheep blowflies (Lucilia cuprina). When the toxin is fused to snowdrop lectin, it is orally active against larvae of the tomato moth (Laconobia oleracea), the rice brown planthopper (Nilaparvata lugens), and the peach-potato aphid (Myzus persicae). The chain is Mu-segestritoxin-Sf1f from Segestria florentina (Tube-web spider).